The chain runs to 288 residues: Probable ketoamine kinase PM0587 (288 aa).

92–94 (EAL) is a binding site for ATP.

It belongs to the fructosamine kinase family.

In terms of biological role, ketoamine kinase that phosphorylates ketoamines on the third carbon of the sugar moiety to generate ketoamine 3-phosphate. The polypeptide is Probable ketoamine kinase PM0587 (Pasteurella multocida (strain Pm70)).